Reading from the N-terminus, the 185-residue chain is Ribosome-recycling factor (185 aa).

This sequence belongs to the RRF family.

Its subcellular location is the cytoplasm. Its function is as follows. Responsible for the release of ribosomes from messenger RNA at the termination of protein biosynthesis. May increase the efficiency of translation by recycling ribosomes from one round of translation to another. This Streptococcus thermophilus (strain CNRZ 1066) protein is Ribosome-recycling factor.